A 465-amino-acid polypeptide reads, in one-letter code: tRNA modification GTPase MnmE (465 aa).

(6S)-5-formyl-5,6,7,8-tetrahydrofolate is bound by residues arginine 21, glutamate 85, and lysine 124. Residues 220–387 enclose the TrmE-type G domain; that stretch reads GVPVAIIGET…LQQRLVAAAH (168 aa). Residue asparagine 230 participates in K(+) binding. Residues 230–235, 249–255, and 274–277 each bind GTP; these read NAGKST, SDIHGTT, and DTAG. Residue serine 234 participates in Mg(2+) binding. K(+)-binding residues include serine 249, isoleucine 251, and threonine 254. Residue threonine 255 coordinates Mg(2+). Lysine 465 provides a ligand contact to (6S)-5-formyl-5,6,7,8-tetrahydrofolate.

It belongs to the TRAFAC class TrmE-Era-EngA-EngB-Septin-like GTPase superfamily. TrmE GTPase family. Homodimer. Heterotetramer of two MnmE and two MnmG subunits. Requires K(+) as cofactor.

The protein localises to the cytoplasm. Its function is as follows. Exhibits a very high intrinsic GTPase hydrolysis rate. Involved in the addition of a carboxymethylaminomethyl (cmnm) group at the wobble position (U34) of certain tRNAs, forming tRNA-cmnm(5)s(2)U34. The chain is tRNA modification GTPase MnmE from Bacteroides fragilis (strain YCH46).